The chain runs to 997 residues: Burkholderia TALE-like protein 2 (997 aa).

Residues 19–50 (LSPLERIKIEKHYGGGATLAFISNQHDELAQV) form a Cryptic repeat -1 repeat. Residues 51–83 (LSRADILKIASYDCAAQALQAVLDCGPMLGKRG) form a Cryptic repeat 0 repeat. 27 Core repeat repeats span residues 84–116 (FSRADIVRIAGNGGGAQALYSVLDVEPTLGKRG), 117–147 (FSQVDVVKIAGGGAQALHTVLEIGPTLGERG), 148–180 (FSRGDIVTIAGNNGGAQALQAVLELEPTLRERG), 181–213 (FNQADIVKIAGNGGGAQALQAVLDVEPALGKRG), 214–244 (FSRVDIAKIAGGGAQALQAVLGLEPTLRKRG), 245–277 (FHPTDIIKIAGNNGGAQALQAVLDLELMLRERG), 278–310 (FSQADIVKMASNIGGAQALQAVLNLEPALCERG), 311–343 (FSQPDIVKMAGNSGGAQALQAVLDLELAFRERG), 344–376 (FSQADIVKMASNIGGAQALQAVLELEPALHERG), 377–409 (FSQANIVKMAGNSGGAQALQAVLDLELVFRERG), 410–442 (FSQPEIVEMAGNIGGAQALHTVLDLELAFRERG), 443–475 (VRQADIVKIVGNNGGAQALQAVFELEPTLRERG), 476–508 (FNQATIVKIAANGGGAQALYSVLDVEPTLDKRG), 509–539 (FSRVDIVKIAGGGAQALHTAFELEPTLRKRG), 540–572 (FNPTDIVKIAGNKGGAQALQAVLELEPALRERG), 573–605 (FNQATIVKMAGNAGGAQALYSVLDVEPALRERG), 606–638 (FSQPEIVKIAGNIGGAQALHTVLELEPTLHKRG), 639–671 (FNPTDIVKIAGNSGGAQALQAVLELEPAFRERG), 672–704 (FGQPDIVKMASNIGGAQALQAVLELEPALRERG), 705–737 (FSQPDIVEMAGNIGGAQALQAVLELEPAFRERG), 738–770 (FSQSDIVKIAGNIGGAQALQAVLELEPTLRESD), 771–803 (FRQADIVNIAGNDGSTQALKAVIEHGPRLRQRG), 804–836 (FNRASIVKIAGNSGGAQALQAVLKHGPTLDERG), 837–869 (FNLTNIVKIAGNGGGAQALKAVIEHGPTLQQRG), 870–902 (FNLTDIVEMAGKGGGAQALKAVLEHGPTLRQRG), 903–935 (FNLIDIVEMASNTGGAQALKTVLEHGPTLRQRD), and 936–967 (LSLIDIVEIASNGGAQALKAVLKYGPVLMQAG). The buD domain stretch occupies residues 84-967 (FSRADIVRIA…KYGPVLMQAG (884 aa)). 4 ANK repeats span residues 772-801 (RQADIVNIAGNDGSTQALKAVIEHGPRLRQ), 805-834 (NRASIVKIAGNSGGAQALQAVLKHGPTLDE), 838-867 (NLTNIVKIAGNGGGAQALKAVIEHGPTLQQ), and 871-900 (NLTDIVEMAGKGGGAQALKAVLEHGPTLRQ). One copy of the Cryptic repeat +1 repeat lies at 968–997 (RSNEEIVHVAARRGGAGRIRKMVALLLERQ).

Belongs to the transcription activator-like effector (TALE) family. Bat subfamily.

Its function is as follows. Binds to DNA in a sequence-specific manner. The chain is Burkholderia TALE-like protein 2 from Mycetohabitans rhizoxinica (strain DSM 19002 / CIP 109453 / HKI 454) (Paraburkholderia rhizoxinica).